A 359-amino-acid chain; its full sequence is Phospho-N-acetylmuramoyl-pentapeptide-transferase (359 aa).

The next 10 helical transmembrane spans lie at 3–23, 53–73, 84–104, 117–137, 156–176, 187–207, 231–251, 255–275, 283–303, and 330–350; these read QILF…PVLI, GGVA…LIGI, GLLV…DDFI, TAKL…ALQF, IATV…LVSA, LDGL…IITF, LALI…WNAA, IFMG…LSIT, VVIG…VAVF, and VIIR…ALFY.

Belongs to the glycosyltransferase 4 family. MraY subfamily. Requires Mg(2+) as cofactor.

The protein resides in the cell membrane. It catalyses the reaction UDP-N-acetyl-alpha-D-muramoyl-L-alanyl-gamma-D-glutamyl-meso-2,6-diaminopimeloyl-D-alanyl-D-alanine + di-trans,octa-cis-undecaprenyl phosphate = di-trans,octa-cis-undecaprenyl diphospho-N-acetyl-alpha-D-muramoyl-L-alanyl-D-glutamyl-meso-2,6-diaminopimeloyl-D-alanyl-D-alanine + UMP. The protein operates within cell wall biogenesis; peptidoglycan biosynthesis. Functionally, catalyzes the initial step of the lipid cycle reactions in the biosynthesis of the cell wall peptidoglycan: transfers peptidoglycan precursor phospho-MurNAc-pentapeptide from UDP-MurNAc-pentapeptide onto the lipid carrier undecaprenyl phosphate, yielding undecaprenyl-pyrophosphoryl-MurNAc-pentapeptide, known as lipid I. This Rhodococcus opacus (strain B4) protein is Phospho-N-acetylmuramoyl-pentapeptide-transferase.